A 602-amino-acid chain; its full sequence is MQSERQKYIRNFSIVAHIDHGKSTLADRLIEATGTLTEREMDTQVLDNMDLEKERGITIKSQAVRLIYKRDTGEEYTLNLIDTPGHVDFNYEVSRSLAACEGAILVVDATQGIQAQTLANCYLALDNDLEIVPVINKIDLPSARPEEVKQEIEDVIGIEAEDAPLVSAKTGLNIKDALEAIVSKVPAPYGDEKAPLKALIFDSYYDSYKGVVCHIRVKEGTIREGTEIKLMNTGKVYEVVEVGVFVPNYMPVDELKAGDVGYVTASIKNVRDARVGDTITEAKRSANEALSGYRPAVPMVFSGIYPVDGAKYEELKEALEKLQVNDAALSFEPETSIALGFGFRCGFLGLLHMDIIQERLEREFNLDIITTAPSVIYKITKTDGTLIELTNPTNMPSPSEIKLMEEPIVKSSIITPSDYVGAVMDLAQNRRGIFKDMQYLDTTRVSLNYEIPLNEIIYDFFDALKSRTRGYASFDYELIGYKDADLVKLDILLNADVVDALSMIVPRERAYAKGRNMAQKLKEIIPRQMFEIPIQAAVGAKIIARETIKAMRKDVLAKCYGGDISRKRKLLEKQKEGKKRMRQVGSVEVPQEAFMAVLKTEE.

The 183-residue stretch at Lys-7 to Tyr-189 folds into the tr-type G domain. GTP-binding positions include Asp-19–Thr-24 and Asn-136–Asp-139.

The protein belongs to the TRAFAC class translation factor GTPase superfamily. Classic translation factor GTPase family. LepA subfamily.

The protein localises to the cell membrane. It catalyses the reaction GTP + H2O = GDP + phosphate + H(+). In terms of biological role, required for accurate and efficient protein synthesis under certain stress conditions. May act as a fidelity factor of the translation reaction, by catalyzing a one-codon backward translocation of tRNAs on improperly translocated ribosomes. Back-translocation proceeds from a post-translocation (POST) complex to a pre-translocation (PRE) complex, thus giving elongation factor G a second chance to translocate the tRNAs correctly. Binds to ribosomes in a GTP-dependent manner. The polypeptide is Elongation factor 4 (Clostridium botulinum (strain Loch Maree / Type A3)).